The chain runs to 438 residues: Citrate synthase (438 aa).

Residues histidine 306 and aspartate 364 contribute to the active site.

It belongs to the citrate synthase family.

It carries out the reaction oxaloacetate + acetyl-CoA + H2O = citrate + CoA + H(+). The protein operates within carbohydrate metabolism; tricarboxylic acid cycle; isocitrate from oxaloacetate: step 1/2. The sequence is that of Citrate synthase (gltA) from Bartonella quintana (strain Toulouse) (Rochalimaea quintana).